A 711-amino-acid chain; its full sequence is 1,4-alpha-glucan-branching enzyme (711 aa).

(1,4-alpha-D-glucosyl)n is bound by residues Trp-98 and Lys-135. Residue Asp-353 is the Nucleophile of the active site. Glu-414 (proton donor) is an active-site residue.

Belongs to the glycosyl hydrolase 13 family. GlgB subfamily.

The protein localises to the cytoplasm. It carries out the reaction Transfers a segment of a (1-&gt;4)-alpha-D-glucan chain to a primary hydroxy group in a similar glucan chain.. Its pathway is glycan biosynthesis; glycogen biosynthesis. Glycogen-branching enzyme participates in the glycogen biosynthetic process along with glycogenin and glycogen synthase. Generates alpha-1,6-glucosidic branches from alpha-1,4-linked glucose chains, to increase solubility of the glycogen polymer. This chain is 1,4-alpha-glucan-branching enzyme (GLC3), found in Debaryomyces hansenii (strain ATCC 36239 / CBS 767 / BCRC 21394 / JCM 1990 / NBRC 0083 / IGC 2968) (Yeast).